We begin with the raw amino-acid sequence, 382 residues long: Elongation factor Tu (382 aa).

GTP-binding positions include 1–7 (HVDHGKT), 62–66 (DCPGH), and 117–120 (NKVD). A tr-type G domain is found at 1-190 (HVDHGKTTLT…AVDEYIPTPQ (190 aa)). Threonine 7 lines the Mg(2+) pocket.

Belongs to the TRAFAC class translation factor GTPase superfamily. Classic translation factor GTPase family. EF-Tu/EF-1A subfamily. In terms of assembly, monomer.

It localises to the cytoplasm. It catalyses the reaction GTP + H2O = GDP + phosphate + H(+). Its function is as follows. GTP hydrolase that promotes the GTP-dependent binding of aminoacyl-tRNA to the A-site of ribosomes during protein biosynthesis. The polypeptide is Elongation factor Tu (Chloroflexus aurantiacus).